The primary structure comprises 85 residues: Small ribosomal subunit protein bS18 (85 aa).

Residues 1–12 (MAFAQAGGGGGQ) show a composition bias toward gly residues. The disordered stretch occupies residues 1–22 (MAFAQAGGGGGQRRPFFRRRKT).

It belongs to the bacterial ribosomal protein bS18 family. Part of the 30S ribosomal subunit. Forms a tight heterodimer with protein bS6.

In terms of biological role, binds as a heterodimer with protein bS6 to the central domain of the 16S rRNA, where it helps stabilize the platform of the 30S subunit. The protein is Small ribosomal subunit protein bS18 of Azorhizobium caulinodans (strain ATCC 43989 / DSM 5975 / JCM 20966 / LMG 6465 / NBRC 14845 / NCIMB 13405 / ORS 571).